The following is a 526-amino-acid chain: Tyrosine-protein kinase transforming protein Src (526 aa).

The span at 1-15 (MGSSKSKPKGPSQRR) shows a compositional bias: basic residues. Residues 1–59 (MGSSKSKPKGPSQRRRSLEPPDSTHHGGFPASQTPNKTAAPDTHRTPSRSFGTVATEPK) form a disordered region. Glycine 2 is lipidated: N-myristoyl glycine; by host. Basic and acidic residues predominate over residues 16-25 (RSLEPPDSTH). The 62-residue stretch at 81 to 142 (GGVTTFVALY…PSNYVAPSDS (62 aa)) folds into the SH3 domain. Positions 148–245 (WYFGKITRRE…GLCHRLTNVC (98 aa)) constitute an SH2 domain. The Protein kinase domain occupies 267–517 (LRLEVKLGQG…TFEYLQAQLL (251 aa)). Residues 273–281 (LGQGCFGEV) and lysine 295 each bind ATP. Residue aspartate 386 is the Proton acceptor of the active site. A Phosphotyrosine; by autocatalysis modification is found at tyrosine 416.

This sequence belongs to the protein kinase superfamily. Tyr protein kinase family. SRC subfamily. In terms of assembly, homodimer. Post-translationally, the phosphorylated form is termed pp60v-src.

It carries out the reaction L-tyrosyl-[protein] + ATP = O-phospho-L-tyrosyl-[protein] + ADP + H(+). Its function is as follows. This phosphoprotein, required for both the initiation and the maintenance of neoplastic transformation, is a protein kinase that catalyzes the phosphorylation of tyrosine residues in vitro. This Rous sarcoma virus subgroup E (strain Schmidt-Ruppin) (RSV-SR-E) protein is Tyrosine-protein kinase transforming protein Src (V-SRC).